A 271-amino-acid chain; its full sequence is Small ribosomal subunit protein uS2 (271 aa).

Over residues 229 to 242 (KERKGKDAEEELKK) the composition is skewed to basic and acidic residues. The segment at 229 to 271 (KERKGKDAEEELKKAAAPKAAPAAEAAPAAEAPAAPVVEAAAE) is disordered. Positions 243–271 (AAAPKAAPAAEAAPAAEAPAAPVVEAAAE) are enriched in low complexity.

This sequence belongs to the universal ribosomal protein uS2 family.

The protein is Small ribosomal subunit protein uS2 of Nitratidesulfovibrio vulgaris (strain DSM 19637 / Miyazaki F) (Desulfovibrio vulgaris).